Reading from the N-terminus, the 269-residue chain is Troponin T, fast skeletal muscle (269 aa).

A compositionally biased stretch (acidic residues) spans 1-23; it reads MSDEEVEQVEEQYEEEEEAQEEA. The tract at residues 1 to 72 is disordered; the sequence is MSDEEVEQVE…EKVDFDDIQK (72 aa). Position 2 is an N-acetylserine (serine 2). Serine 2 carries the phosphoserine modification. Basic and acidic residues predominate over residues 24–34; sequence AEVHEEVHEPE. The span at 35–47 shows a compositional bias: acidic residues; that stretch reads EVQEDTAEEDAEE. Residues 60-72 show a composition bias toward basic and acidic residues; sequence PEGEKVDFDDIQK. At serine 88 the chain carries Phosphoserine. The span at 111–153 shows a compositional bias: basic and acidic residues; the sequence is RAERAEQQRIRAEKERERQNRLAEEKARREEEDAKRRAEDDLK. The tract at residues 111 to 158 is disordered; the sequence is RAERAEQQRIRAEKERERQNRLAEEKARREEEDAKRRAEDDLKKKKAL. Serine 159, serine 166, and serine 167 each carry phosphoserine. Residues 245–269 are disordered; sequence RIDQAQKHSKKAGTPAKGKVGGRWK.

It belongs to the troponin T family. As to expression, in fetal and adult fast skeletal muscles, with a higher level expression in fetal than in adult muscle.

Troponin T is the tropomyosin-binding subunit of troponin, the thin filament regulatory complex which confers calcium-sensitivity to striated muscle actomyosin ATPase activity. This Homo sapiens (Human) protein is Troponin T, fast skeletal muscle (TNNT3).